Here is a 212-residue protein sequence, read N- to C-terminus: Pyridoxine/pyridoxamine 5'-phosphate oxidase (212 aa).

Substrate-binding positions include 7-10 (RRQY) and lysine 65. FMN contacts are provided by residues 60 to 65 (RIVLLK), 75 to 76 (FT), arginine 81, lysine 82, and glutamine 104. Substrate is bound by residues tyrosine 122, arginine 126, and serine 130. Residues 139–140 (QS) and tryptophan 184 each bind FMN. 190 to 192 (RLH) provides a ligand contact to substrate. Arginine 194 contacts FMN.

The protein belongs to the pyridoxamine 5'-phosphate oxidase family. In terms of assembly, homodimer. FMN is required as a cofactor.

It carries out the reaction pyridoxamine 5'-phosphate + O2 + H2O = pyridoxal 5'-phosphate + H2O2 + NH4(+). The enzyme catalyses pyridoxine 5'-phosphate + O2 = pyridoxal 5'-phosphate + H2O2. The protein operates within cofactor metabolism; pyridoxal 5'-phosphate salvage; pyridoxal 5'-phosphate from pyridoxamine 5'-phosphate: step 1/1. It participates in cofactor metabolism; pyridoxal 5'-phosphate salvage; pyridoxal 5'-phosphate from pyridoxine 5'-phosphate: step 1/1. Functionally, catalyzes the oxidation of either pyridoxine 5'-phosphate (PNP) or pyridoxamine 5'-phosphate (PMP) into pyridoxal 5'-phosphate (PLP). In Alteromonas mediterranea (strain DSM 17117 / CIP 110805 / LMG 28347 / Deep ecotype), this protein is Pyridoxine/pyridoxamine 5'-phosphate oxidase.